A 339-amino-acid chain; its full sequence is Hairy/enhancer-of-split related with YRPW motif protein 2 (339 aa).

The interval 1 to 52 (MKRPCEETTSESDLDETIDVGSENNYPGHATSSVMRSNSPTTTSQIMARKKR) is disordered. Acidic residues predominate over residues 8 to 18 (TTSESDLDETI). Positions 22–46 (SENNYPGHATSSVMRSNSPTTTSQI) are enriched in polar residues. Residues 47-116 (MARKKRRGII…GGKGYFDAHA (70 aa)) form a transcriptional repression and interaction with NCOR1 and SIN3A region. One can recognise a bHLH domain in the interval 48-103 (ARKKRRGIIEKRRRDRINNSLSELRRLVPTAFEKQGSAKLEKAEILQMTVDHLKML). Residues 122-157 (MSIGFRECLTEVARYLSSVEGLDPSDPLRVRLVSHL) enclose the Orange domain. The disordered stretch occupies residues 310–339 (SVSAASSPQQTSTGTNNKPYQPWGTEVGAF). Polar residues predominate over residues 318–328 (QQTSTGTNNKP). Positions 329 to 332 (YQPW) match the YQPW motif motif.

It belongs to the HEY family. In terms of assembly, may self-associate. Interacts with ARNT. Interacts with GATA4, GATA6, HES1 and HEYL. Interacts with HDAC1, NCOR1 and SIN3A. As to expression, highly expressed in the aorta, lower expression detected in the heart, brain, kidney, lung, muscle, ovary and testis.

It is found in the nucleus. Functionally, transcriptional repressor which functions as a downstream effector of Notch signaling in cardiovascular development. Specifically required for the Notch-induced endocardial epithelial to mesenchymal transition, which is itself criticial for cardiac valve and septum development. May be required in conjunction with HEY1 to specify arterial cell fate or identity. Promotes maintenance of neuronal precursor cells and glial versus neuronal fate specification. Binds preferentially to the canonical E box sequence 5'-CACGTG-3'. Represses transcription by the cardiac transcriptional activators GATA4 and GATA6 and by the neuronal bHLH factors ASCL1/MASH1 and NEUROD4/MATH3. The protein is Hairy/enhancer-of-split related with YRPW motif protein 2 (Hey2) of Mus musculus (Mouse).